Consider the following 446-residue polypeptide: Endoplasmic reticulum membrane adapter protein XK (446 aa).

Residues 1–2 (MK) are Cytoplasmic-facing. The helical transmembrane segment at 3-23 (FPASVIASVFLFVAETAAALY) threads the bilayer. At 24 to 37 (LSSTYRSAGDRMWQ) the chain is on the extracellular side. The helical transmembrane segment at 38–58 (VLTLLFSLMPCALVQFTLLFV) threads the bilayer. At 59-68 (HRDLSRDRPL) the chain is on the cytoplasmic side. A helical membrane pass occupies residues 69 to 89 (ALLMHLLQLGPLYRCCEVFCI). Residues 90 to 140 (YCQSDQNEEPYVSITKKRQMPKDGLSEEVEKEVGQAEGKLITHRSAFSRAS) lie on the Extracellular side of the membrane. Ser115 carries the phosphoserine modification. The helical transmembrane segment at 141–161 (VIQAFLGSAPQLTLQLYITVL) threads the bilayer. The Cytoplasmic segment spans residues 162–171 (EQNITTGRCF). The helical transmembrane segment at 172-192 (IMTLSLLSIVYGALRCNILAI) threads the bilayer. The Extracellular segment spans residues 193–208 (KIKYDEYEVKVKPLAY). Residues 209–229 (VCIFLWRSFEIATRVIVLVLF) traverse the membrane as a helical segment. Residues 230–235 (TSVLKI) are Cytoplasmic-facing. Residues 236 to 256 (WVVAVILVNFFSFFLYPWIVF) form a helical membrane-spanning segment. Topologically, residues 257–277 (WCSGSPFPENIEKALSRVGTT) are extracellular. The chain crosses the membrane as a helical span at residues 278-298 (IVLCFLTLLYAGINMFCWSAV). The Cytoplasmic portion of the chain corresponds to 299-317 (QLKIDNPELISKSQNWYRL). Residues 318–338 (LIYYMTRFIENSVLLLLWYFF) traverse the membrane as a helical segment. Residues 339-349 (KTDIYMYVCAP) are Extracellular-facing. The chain crosses the membrane as a helical span at residues 350-370 (LLILQLLIGYCTGILFMLVFY). Residues 371–446 (QFFHPCKKLF…IWTAVDLCSA (76 aa)) are Cytoplasmic-facing.

The protein belongs to the XK family. As to quaternary structure, heterodimer with Kell; disulfide-linked. Interacts with VPS13A.

The protein resides in the endoplasmic reticulum membrane. Its function is as follows. Recruits the lipid transfer protein VPS13A from lipid droplets to the endoplasmic reticulum (ER) membrane. The sequence is that of Endoplasmic reticulum membrane adapter protein XK from Mus musculus (Mouse).